The following is a 141-amino-acid chain: Nuclear transcription factor Y subunit B-1 (141 aa).

Positions 1-23 (MADTPSSPAGDGGESGGSVREQD) are disordered. Ala-2 is subject to N-acetylalanine. A DNA-binding region spans residues 26-32 (LPIANIS). The tract at residues 53 to 64 (VQECVSEFISFI) is subunit association domain (SAD). Residues 114–141 (DNKGSGKSGDGSNRDAGGGVSGEEMPSW) are disordered.

The protein belongs to the NFYB/HAP3 subunit family. In terms of assembly, heterotrimeric transcription factor composed of three components, NF-YA, NF-YB and NF-YC. NF-YB and NF-YC must interact and dimerize for NF-YA association and DNA binding. Binds directly with DPB3-1. Ubiquitous. Predominantly expressed in leaves, flowers and siliques.

It localises to the nucleus. In terms of biological role, component of the NF-Y/HAP transcription factor complex. The NF-Y complex stimulates the transcription of various genes by recognizing and binding to a CCAAT motif in promoters. The polypeptide is Nuclear transcription factor Y subunit B-1 (Arabidopsis thaliana (Mouse-ear cress)).